We begin with the raw amino-acid sequence, 327 residues long: tRNA dimethylallyltransferase (327 aa).

14-21 (GPTASGKT) contributes to the ATP binding site. 16–21 (TASGKT) serves as a coordination point for substrate. Interaction with substrate tRNA regions lie at residues 39-42 (DSAL) and 163-167 (QRIQR).

Belongs to the IPP transferase family. As to quaternary structure, monomer. Requires Mg(2+) as cofactor.

It catalyses the reaction adenosine(37) in tRNA + dimethylallyl diphosphate = N(6)-dimethylallyladenosine(37) in tRNA + diphosphate. Its function is as follows. Catalyzes the transfer of a dimethylallyl group onto the adenine at position 37 in tRNAs that read codons beginning with uridine, leading to the formation of N6-(dimethylallyl)adenosine (i(6)A). This Xanthomonas oryzae pv. oryzae (strain KACC10331 / KXO85) protein is tRNA dimethylallyltransferase.